The primary structure comprises 91 residues: DNA-directed RNA polymerase subunit omega (91 aa).

It belongs to the RNA polymerase subunit omega family. In terms of assembly, the RNAP catalytic core consists of 2 alpha, 1 beta, 1 beta' and 1 omega subunit. When a sigma factor is associated with the core the holoenzyme is formed, which can initiate transcription. The rRNA transcription and antitermination complex (rrnTAC) consists of RNAP, NusA, NusB, NusE (rpsJ), NusG, SubB, ribosomal protein S4, DNA and precursor rRNA; S4 is more flexible than other subunits.

The catalysed reaction is RNA(n) + a ribonucleoside 5'-triphosphate = RNA(n+1) + diphosphate. Promotes RNA polymerase (RNAP) assembly. Latches the N- and C-terminal regions of the beta' subunit thereby facilitating its interaction with the beta and alpha subunits. Its function is as follows. Part of the processive rRNA transcription and antitermination complex (rrnTAC). The complex forms an RNA-chaperone ring around the RNA exit tunnel of RNAP. It supports rapid transcription and antitermination of rRNA operons, cotranscriptional rRNA folding, and annealing of distal rRNA regions to allow correct ribosome biogenesis. The sequence is that of DNA-directed RNA polymerase subunit omega (rpoZ) from Escherichia coli (strain K12).